The following is a 672-amino-acid chain: Acetoacetyl-CoA synthetase (672 aa).

The protein belongs to the ATP-dependent AMP-binding enzyme family.

The protein resides in the cytoplasm. Its subcellular location is the cytosol. It catalyses the reaction acetoacetate + ATP + CoA = acetoacetyl-CoA + AMP + diphosphate. Functionally, converts acetoacetate to acetoacetyl-CoA in the cytosol. Ketone body-utilizing enzyme, responsible for the synthesis of cholesterol and fatty acids. The sequence is that of Acetoacetyl-CoA synthetase (AACS) from Macaca fascicularis (Crab-eating macaque).